The following is an 89-amino-acid chain: Large ribosomal subunit protein bL31B (89 aa).

Belongs to the bacterial ribosomal protein bL31 family. Type B subfamily. Part of the 50S ribosomal subunit.

This is Large ribosomal subunit protein bL31B from Aeromonas hydrophila subsp. hydrophila (strain ATCC 7966 / DSM 30187 / BCRC 13018 / CCUG 14551 / JCM 1027 / KCTC 2358 / NCIMB 9240 / NCTC 8049).